A 209-amino-acid polypeptide reads, in one-letter code: dITP/XTP pyrophosphatase (209 aa).

7-12 (TGNKGK) is a substrate binding site. The active-site Proton acceptor is the D73. D73 contributes to the Mg(2+) binding site. Residues S74, 155–158 (FGYD), K178, and 183–184 (HR) each bind substrate.

The protein belongs to the HAM1 NTPase family. As to quaternary structure, homodimer. Requires Mg(2+) as cofactor.

It catalyses the reaction XTP + H2O = XMP + diphosphate + H(+). The enzyme catalyses dITP + H2O = dIMP + diphosphate + H(+). It carries out the reaction ITP + H2O = IMP + diphosphate + H(+). Its function is as follows. Pyrophosphatase that catalyzes the hydrolysis of nucleoside triphosphates to their monophosphate derivatives, with a high preference for the non-canonical purine nucleotides XTP (xanthosine triphosphate), dITP (deoxyinosine triphosphate) and ITP. Seems to function as a house-cleaning enzyme that removes non-canonical purine nucleotides from the nucleotide pool, thus preventing their incorporation into DNA/RNA and avoiding chromosomal lesions. This Sulfurovum sp. (strain NBC37-1) protein is dITP/XTP pyrophosphatase.